Here is a 481-residue protein sequence, read N- to C-terminus: 3-isopropylmalate dehydratase large subunit (481 aa).

[4Fe-4S] cluster-binding residues include cysteine 363, cysteine 423, and cysteine 426. A disordered region spans residues 434 to 465 (LRPGQRAASTSNRNFEGRQGRGGRTHLVSPPV).

The protein belongs to the aconitase/IPM isomerase family. LeuC type 1 subfamily. Heterodimer of LeuC and LeuD. [4Fe-4S] cluster serves as cofactor.

It catalyses the reaction (2R,3S)-3-isopropylmalate = (2S)-2-isopropylmalate. The protein operates within amino-acid biosynthesis; L-leucine biosynthesis; L-leucine from 3-methyl-2-oxobutanoate: step 2/4. Its function is as follows. Catalyzes the isomerization between 2-isopropylmalate and 3-isopropylmalate, via the formation of 2-isopropylmaleate. This Salinispora tropica (strain ATCC BAA-916 / DSM 44818 / JCM 13857 / NBRC 105044 / CNB-440) protein is 3-isopropylmalate dehydratase large subunit.